A 724-amino-acid chain; its full sequence is MLSQTSIPEVKEDVIGYALHQRRARVGQFQDLGPPDLITLIKSLPSSSSTTTATASANDNGATSNINGQDPTTIVTELHSHDKLKGQIGTFFYCMGIDTSDPTSITIFAKKITDLFLDTPQIWFGKKKHFHVSKISISSWNAFRKYDVNIIVHIPGTVQTYIINSDGEQSQLPSVAEASSGRNSQDLNVNMIWAETFMSGIVRDIMIMKDNRADGESQNLVETLIFNPFTSGELEDVANNFIKLFPLVYEKGVYLDAPTHVLNPSLTNNYLVETLVEIVRLTKSLEACRKMLKKLIEIHPEAVIILIRVYFACDLEIDAVDLINEQLNSPSSFLADDSKTSHIQLIFKSELLSIQSEFLLDVKRDYKLAKEVAMEAVNCAPNEFKTWYLLTRIYIKLNDMSNALLSLNACPMSQVKEKYVLRRIAPITSDENLHLPLPLDASIEEISSLNPMDVQLEQKSADPNLVNLSASSLKSTFQLAYKLLTEIVQITGWEQLLKYRSKIFVMEDEYQGSTSSIDEAEVRGNDISKMRSKRLCERWLDNLFMLLYEDLKTYTDWQSEQLYFDAQNSKYHKLTVEWELFGLCAKRLGHLPEAAKAFQIGLSQRFSPVCAKNLLQFYIDEHKRIRRDSVSANSELTSSQILSSINDIDSSIIDLVVKICCWNHRWYIEFSIILIDALSVAVQDMGITKVHNEIASRFSDPVAQLIDDNILNFLKNFTNDTFDN.

Positions 51 to 65 (TTATASANDNGATSN) are enriched in low complexity. Positions 51–71 (TTATASANDNGATSNINGQDP) are disordered. The CHS5-binding stretch occupies residues 711–724 (LNFLKNFTNDTFDN).

This sequence belongs to the CHAPS family. In terms of assembly, component of the CHS5/6 complex composed of the 4 CHAPS proteins BCH1, BCH2, BUD7, and CHS6 as well as at least CHS5 and GTP-bound ARF1. The complex interacts with the cargo protein CHS3.

It localises to the golgi apparatus. The protein localises to the trans-Golgi network membrane. Its function is as follows. Member of the CHS5-ARF1P-binding proteins (CHAPS) which mediates export of specific cargo proteins, including chitin synthase CHS3. This chain is Protein BCH1 (BCH1), found in Saccharomyces cerevisiae (strain ATCC 204508 / S288c) (Baker's yeast).